A 142-amino-acid chain; its full sequence is Large ribosomal subunit protein uL13 (142 aa).

It belongs to the universal ribosomal protein uL13 family. Part of the 50S ribosomal subunit.

This protein is one of the early assembly proteins of the 50S ribosomal subunit, although it is not seen to bind rRNA by itself. It is important during the early stages of 50S assembly. The chain is Large ribosomal subunit protein uL13 from Bordetella avium (strain 197N).